A 448-amino-acid chain; its full sequence is Phosphoglucosamine mutase (448 aa).

Residue Ser-100 is the Phosphoserine intermediate of the active site. 4 residues coordinate Mg(2+): Ser-100, Asp-240, Asp-242, and Asp-244. Phosphoserine is present on Ser-100.

Belongs to the phosphohexose mutase family. Requires Mg(2+) as cofactor. In terms of processing, activated by phosphorylation.

The catalysed reaction is alpha-D-glucosamine 1-phosphate = D-glucosamine 6-phosphate. Functionally, catalyzes the conversion of glucosamine-6-phosphate to glucosamine-1-phosphate. The polypeptide is Phosphoglucosamine mutase (Bacillus mycoides (strain KBAB4) (Bacillus weihenstephanensis)).